The sequence spans 133 residues: Large ribosomal subunit protein eL19 (133 aa).

Residues 55–83 form a disordered region; sequence RGISGARKKPRRKGPGSRKGGKYSKLPRK. The span at 60–83 shows a compositional bias: basic residues; it reads ARKKPRRKGPGSRKGGKYSKLPRK.

The protein belongs to the eukaryotic ribosomal protein eL19 family. In terms of assembly, part of the 50S ribosomal subunit.

Its function is as follows. Binds to the 23S rRNA. The chain is Large ribosomal subunit protein eL19 from Korarchaeum cryptofilum (strain OPF8).